We begin with the raw amino-acid sequence, 1366 residues long: Guanine nucleotide exchange factor LTE1 (1366 aa).

The N-terminal Ras-GEF domain maps to 37-170 (GTVRILKCTL…SLKKLWVQNV (134 aa)). 3 disordered regions span residues 290–314 (SGVS…KDNK), 661–690 (EKSD…ESDA), and 955–979 (STDE…DHGI). Composition is skewed to basic and acidic residues over residues 298–314 (PKQE…KDNK) and 661–670 (EKSDSTDDRS). Residues 671 to 690 (CSPQNREATETSATSMESDA) show a composition bias toward polar residues. Residues 1121–1361 (DSKSVANQLT…LSHDEINSIS (241 aa)) form the Ras-GEF domain.

Belongs to the LTE1 family.

It is found in the cytoplasm. It localises to the bud. Its function is as follows. GDP-GTP exchange factor component of the mitotic exit network (MEN). Fine-tunes the timing of the mitotic exit and couples this event with cytokinesis. May also be involved in proprotein-processing in the secretory pathway. The sequence is that of Guanine nucleotide exchange factor LTE1 (LTE1) from Kluyveromyces lactis (strain ATCC 8585 / CBS 2359 / DSM 70799 / NBRC 1267 / NRRL Y-1140 / WM37) (Yeast).